We begin with the raw amino-acid sequence, 149 residues long: Transcriptional repressor NrdR (149 aa).

A zinc finger lies at 3 to 34; the sequence is CPFCDTEETKVIDSRLVSDGYQVRRRRECGHC. One can recognise an ATP-cone domain in the interval 49–139; the sequence is PKIIKTDGTR…VYLSFDDIDQ (91 aa).

Belongs to the NrdR family. It depends on Zn(2+) as a cofactor.

Negatively regulates transcription of bacterial ribonucleotide reductase nrd genes and operons by binding to NrdR-boxes. The sequence is that of Transcriptional repressor NrdR from Haemophilus influenzae (strain 86-028NP).